The following is a 185-amino-acid chain: CASP-like protein 5A1 (185 aa).

Residues 1–48 lie on the Cytoplasmic side of the membrane; it reads MNVSHPAVHPVGVPPALGGQAVPPRMRMRVRMEYLVFQGMPLPGSLGG. Residues 49 to 69 form a helical membrane-spanning segment; it reads LMLRLGQFCSALIAFSVMVSI. Residues 70-76 lie on the Extracellular side of the membrane; sequence RDFSVTA. Residues 77-97 form a helical membrane-spanning segment; that stretch reads FCYLLAATVLQCLWSLALAVI. At 98-121 the chain is on the cytoplasmic side; sequence DVYALLVKRSLRNPLLVSIFVVGD. Residues 122–142 traverse the membrane as a helical segment; the sequence is GVTATLTFAAACASAGVVVLI. At 143–160 the chain is on the extracellular side; it reads GNDISMCKSNPCANYEAA. A helical membrane pass occupies residues 161 to 181; it reads IIMAFLSWFMVSISFVLTFWM. At 182 to 185 the chain is on the cytoplasmic side; sequence LATL.

It belongs to the Casparian strip membrane proteins (CASP) family. As to quaternary structure, homodimer and heterodimers.

It is found in the cell membrane. The polypeptide is CASP-like protein 5A1 (Pinus contorta (Shore pine)).